The following is a 614-amino-acid chain: Acetylcholinesterase (614 aa).

Residues 1–31 form the signal peptide; it reads MRPPWYPLHTPSLAFPLLFLLLSLLGGGARA. A disulfide bridge links Cys100 with Cys127. The active-site Acyl-ester intermediate is Ser234. Cysteines 288 and 303 form a disulfide. An N-linked (GlcNAc...) asparagine glycan is attached at Asn296. Glu365 (charge relay system) is an active-site residue. N-linked (GlcNAc...) asparagine glycosylation occurs at Asn381. Residues Cys440 and Cys560 are joined by a disulfide bond. His478 functions as the Charge relay system in the catalytic mechanism. An N-linked (GlcNAc...) asparagine glycan is attached at Asn495.

Belongs to the type-B carboxylesterase/lipase family. In terms of assembly, isoform H generates GPI-anchored dimers; disulfide linked. Isoform T generates multiple structures, ranging from monomers and dimers to collagen-tailed and hydrophobic-tailed forms, in which catalytic tetramers are associated with anchoring proteins that attach them to the basal lamina or to cell membranes. In the collagen-tailed forms, isoform T subunits are associated with a specific collagen, COLQ, which triggers the formation of isoform T tetramers, from monomers and dimers. Interacts with PRIMA1. The interaction with PRIMA1 is required to anchor it to the basal lamina of cells and organize into tetramers. Predominates in most expressing tissues except erythrocytes where a glycophospholipid-attached form of ACHE predominates.

The protein localises to the synapse. It localises to the secreted. It is found in the cell membrane. It carries out the reaction acetylcholine + H2O = choline + acetate + H(+). Terminates signal transduction at the neuromuscular junction by rapid hydrolysis of the acetylcholine released into the synaptic cleft. The protein is Acetylcholinesterase (Ache) of Mus musculus (Mouse).